A 284-amino-acid polypeptide reads, in one-letter code: tRNA pseudouridine synthase B (284 aa).

Aspartate 40 serves as the catalytic Nucleophile.

It belongs to the pseudouridine synthase TruB family. Type 1 subfamily.

The enzyme catalyses uridine(55) in tRNA = pseudouridine(55) in tRNA. Functionally, responsible for synthesis of pseudouridine from uracil-55 in the psi GC loop of transfer RNAs. The polypeptide is tRNA pseudouridine synthase B (Helicobacter hepaticus (strain ATCC 51449 / 3B1)).